The following is a 207-amino-acid chain: Glutathione S-transferase P (207 aa).

Residues 1–78 (PPYTITYFPV…HLGRSFGLYG (78 aa)) enclose the GST N-terminal domain. Position 3 is a phosphotyrosine; by EGFR (tyrosine 3). Glutathione-binding positions include tyrosine 7, arginine 13, tryptophan 38, lysine 42, and 49-50 (QL). Threonine 59 carries the phosphothreonine modification. 62 to 63 (QS) lines the glutathione pocket. Residues 80–201 (DQKEAALVDM…ASPEHVNRPI (122 aa)) form the GST C-terminal domain. N6-succinyllysine is present on residues lysine 100 and lysine 113. N6-acetyllysine is present on lysine 125.

Belongs to the GST superfamily. Pi family. In terms of assembly, homodimer. Interacts with CDK5.

The protein localises to the cytoplasm. The protein resides in the mitochondrion. Its subcellular location is the nucleus. The enzyme catalyses RX + glutathione = an S-substituted glutathione + a halide anion + H(+). It carries out the reaction prostaglandin J2 + glutathione = prostaglandin J2-S-(R)-glutathione. It catalyses the reaction prostaglandin J2 + glutathione = prostaglandin J2-S-(S)-glutathione. The catalysed reaction is prostaglandin A2 + glutathione = prostaglandin A2-S-(S)-glutathione. The enzyme catalyses 11(S)-hydroxy-14(S),15(S)-epoxy-(5Z,8Z,12E)-eicosatrienoate + glutathione = (11S,15S)-dihydroxy-14(R)-S-glutathionyl-(5Z,8Z,12E)-eicosatrienoate. Functionally, conjugation of reduced glutathione to a wide number of exogenous and endogenous hydrophobic electrophiles. Involved in the formation of glutathione conjugates of both prostaglandin A2 (PGA2) and prostaglandin J2 (PGJ2). Participates in the formation of novel hepoxilin regioisomers. Negatively regulates CDK5 activity via p25/p35 translocation to prevent neurodegeneration. In Sus scrofa (Pig), this protein is Glutathione S-transferase P (GSTP1).